A 382-amino-acid polypeptide reads, in one-letter code: Galactokinase (382 aa).

Residue 34 to 37 (EHTD) participates in substrate binding. 124–130 (GAGLSSS) serves as a coordination point for ATP. Mg(2+)-binding residues include serine 130 and glutamate 162. The active-site Proton acceptor is the aspartate 174. Substrate is bound at residue tyrosine 223.

Belongs to the GHMP kinase family. GalK subfamily.

It localises to the cytoplasm. The enzyme catalyses alpha-D-galactose + ATP = alpha-D-galactose 1-phosphate + ADP + H(+). It participates in carbohydrate metabolism; galactose metabolism. Its function is as follows. Catalyzes the transfer of the gamma-phosphate of ATP to D-galactose to form alpha-D-galactose-1-phosphate (Gal-1-P). The polypeptide is Galactokinase (Escherichia coli (strain SMS-3-5 / SECEC)).